Consider the following 69-residue polypeptide: Large ribosomal subunit protein bL28 (69 aa).

The protein belongs to the bacterial ribosomal protein bL28 family.

The sequence is that of Large ribosomal subunit protein bL28 from Aquifex aeolicus (strain VF5).